We begin with the raw amino-acid sequence, 193 residues long: Dual-action ribosomal maturation protein DarP (193 aa).

The segment covering 1–10 (MRGRDEDTGE) has biased composition (basic and acidic residues). 2 disordered regions span residues 1-20 (MRGRDEDTGEFRGASRSQQR) and 171-193 (QEQGLESGDSGLEDGESALEDDE). Over residues 181–193 (GLEDGESALEDDE) the composition is skewed to acidic residues.

The protein belongs to the DarP family.

Its subcellular location is the cytoplasm. Member of a network of 50S ribosomal subunit biogenesis factors which assembles along the 30S-50S interface, preventing incorrect 23S rRNA structures from forming. Promotes peptidyl transferase center (PTC) maturation. The protein is Dual-action ribosomal maturation protein DarP of Xanthomonas oryzae pv. oryzae (strain MAFF 311018).